The following is a 267-amino-acid chain: Orotidine 5'-phosphate decarboxylase (267 aa).

S2 is subject to N-acetylserine. Substrate is bound by residues D37, 59 to 61 (KTH), and 91 to 100 (DRKFADIGNT). K93 serves as the catalytic Proton donor. Glycyl lysine isopeptide (Lys-Gly) (interchain with G-Cter in ubiquitin) cross-links involve residues K93 and K209. Substrate-binding residues include Y217 and R235. Residue K253 forms a Glycyl lysine isopeptide (Lys-Gly) (interchain with G-Cter in ubiquitin) linkage.

This sequence belongs to the OMP decarboxylase family.

It catalyses the reaction orotidine 5'-phosphate + H(+) = UMP + CO2. Its pathway is pyrimidine metabolism; UMP biosynthesis via de novo pathway; UMP from orotate: step 2/2. This is Orotidine 5'-phosphate decarboxylase (URA3) from Saccharomyces cerevisiae (strain ATCC 204508 / S288c) (Baker's yeast).